Consider the following 387-residue polypeptide: Succinate--CoA ligase [ADP-forming] subunit beta (387 aa).

The ATP-grasp domain occupies 9–245 (KDLLESYGLK…KSQENAKELK (237 aa)). Residues K46, 53–55 (GRG), E100, Y103, and E108 each bind ATP. The Mg(2+) site is built by N200 and D214. Substrate is bound by residues N265 and 322-324 (GIV).

Belongs to the succinate/malate CoA ligase beta subunit family. In terms of assembly, heterotetramer of two alpha and two beta subunits. It depends on Mg(2+) as a cofactor.

It carries out the reaction succinate + ATP + CoA = succinyl-CoA + ADP + phosphate. The catalysed reaction is GTP + succinate + CoA = succinyl-CoA + GDP + phosphate. The protein operates within carbohydrate metabolism; tricarboxylic acid cycle; succinate from succinyl-CoA (ligase route): step 1/1. Succinyl-CoA synthetase functions in the citric acid cycle (TCA), coupling the hydrolysis of succinyl-CoA to the synthesis of either ATP or GTP and thus represents the only step of substrate-level phosphorylation in the TCA. The beta subunit provides nucleotide specificity of the enzyme and binds the substrate succinate, while the binding sites for coenzyme A and phosphate are found in the alpha subunit. The sequence is that of Succinate--CoA ligase [ADP-forming] subunit beta from Francisella tularensis subsp. novicida (strain U112).